The chain runs to 446 residues: White-opaque regulator 2 (446 aa).

Residues 1–24 (MTQLPSVSELINRTGSIGSSSNIT) are compositionally biased toward polar residues. The disordered stretch occupies residues 1–203 (MTQLPSVSEL…QPNFPYHNNF (203 aa)). The segment covering 30–64 (TTTSATNTTTAATATTVTSTTPRSENSYSPNSPYS) has biased composition (low complexity). Residues 67-86 (TRPSNTSLTNYSAGSGITVA) show a composition bias toward polar residues. Low complexity-rich tracts occupy residues 87–97 (SSSFQFSQPSP) and 104–120 (STSSQSSSGDSFQQHQS). Polar residues predominate over residues 121–144 (NPSGVSMSSNTSPRTSIVQSMSSV). Positions 166 to 184 (VQPPPQQQQLQQPPPPPPQ) are enriched in pro residues. The span at 185–195 (QQQHIYPQQQP) shows a compositional bias: low complexity. A DNA-binding region (zn(2)-C6 fungal-type) is located at residues 305–332 (CLTCRKRRIKCDERKPTCFNCERSKKSC). A disordered region spans residues 336 to 402 (QDLSKLPPRK…SGSSTNSRNL (67 aa)). Over residues 358 to 369 (NQQQQQQQQNQQ) the composition is skewed to low complexity. Polar residues predominate over residues 387–401 (HQITSISGSSTNSRN).

Its subcellular location is the nucleus. Transcriptional regulator of the switch between 2 heritable states, the white and opaque states. These 2 cell types differ in many characteristics, including cell structure, mating competence, and virulence. Each state is heritable for many generations, and switching between states occurs stochastically, at low frequency. WOR2 is necessary for the stability of the opaque state phenotypic switching from the white to the opaque phase is a necessary step for mating. Plays a role in cell adhesion and pseudohyphal growth. The protein is White-opaque regulator 2 (WOR2) of Candida albicans (strain SC5314 / ATCC MYA-2876) (Yeast).